The sequence spans 308 residues: HPr kinase/phosphorylase (308 aa).

Active-site residues include H138 and K159. 153 to 160 serves as a coordination point for ATP; the sequence is GESGLGKS. S160 lines the Mg(2+) pocket. D177 (proton acceptor; for phosphorylation activity. Proton donor; for dephosphorylation activity) is an active-site residue. The important for the catalytic mechanism of both phosphorylation and dephosphorylation stretch occupies residues 201 to 210; it reads LEVRGLGLLD. E202 lines the Mg(2+) pocket. Residue R243 is part of the active site. An important for the catalytic mechanism of dephosphorylation region spans residues 264–269; sequence QVAAGR.

It belongs to the HPrK/P family. In terms of assembly, homohexamer. The cofactor is Mg(2+).

The catalysed reaction is [HPr protein]-L-serine + ATP = [HPr protein]-O-phospho-L-serine + ADP + H(+). It carries out the reaction [HPr protein]-O-phospho-L-serine + phosphate + H(+) = [HPr protein]-L-serine + diphosphate. Its function is as follows. Catalyzes the ATP- as well as the pyrophosphate-dependent phosphorylation of a specific serine residue in HPr, a phosphocarrier protein of the phosphoenolpyruvate-dependent sugar phosphotransferase system (PTS). HprK/P also catalyzes the pyrophosphate-producing, inorganic phosphate-dependent dephosphorylation (phosphorolysis) of seryl-phosphorylated HPr (P-Ser-HPr). This chain is HPr kinase/phosphorylase, found in Bordetella avium (strain 197N).